We begin with the raw amino-acid sequence, 491 residues long: UDP-N-acetylmuramate--L-alanine ligase (491 aa).

ATP is bound at residue 115 to 121 (GTHGKTT).

This sequence belongs to the MurCDEF family.

It localises to the cytoplasm. The enzyme catalyses UDP-N-acetyl-alpha-D-muramate + L-alanine + ATP = UDP-N-acetyl-alpha-D-muramoyl-L-alanine + ADP + phosphate + H(+). It functions in the pathway cell wall biogenesis; peptidoglycan biosynthesis. Its function is as follows. Cell wall formation. The sequence is that of UDP-N-acetylmuramate--L-alanine ligase from Parvibaculum lavamentivorans (strain DS-1 / DSM 13023 / NCIMB 13966).